The following is a 192-amino-acid chain: Adenylate kinase (192 aa).

10–15 contributes to the ATP binding site; the sequence is GSGKGT. Residues 30–59 are NMP; it reads STGDMLREVISRETEVGRKAKAIINAGALV. AMP contacts are provided by residues T31, R36, 57 to 59, 85 to 88, and Q92; these read ALV and GYPR. Positions 126–142 are LID; sequence KRVQETIAVGGQVRSDD. ATP is bound at residue R127. The AMP site is built by R139 and R150. ATP is bound at residue M178.

This sequence belongs to the adenylate kinase family. In terms of assembly, monomer.

The protein localises to the cytoplasm. It carries out the reaction AMP + ATP = 2 ADP. It functions in the pathway purine metabolism; AMP biosynthesis via salvage pathway; AMP from ADP: step 1/1. Catalyzes the reversible transfer of the terminal phosphate group between ATP and AMP. Plays an important role in cellular energy homeostasis and in adenine nucleotide metabolism. This is Adenylate kinase from Bartonella quintana (strain Toulouse) (Rochalimaea quintana).